The following is a 215-amino-acid chain: Cytochrome b6 (215 aa).

Residues Ile32–Phe52 form a helical membrane-spanning segment. Cys35 serves as a coordination point for heme c. The heme b site is built by His86 and His100. A run of 3 helical transmembrane segments spans residues Ala90–Phe110, Leu116–Tyr136, and Leu186–Ile206. Residues His187 and His202 each coordinate heme b.

The protein belongs to the cytochrome b family. PetB subfamily. In terms of assembly, the 4 large subunits of the cytochrome b6-f complex are cytochrome b6, subunit IV (17 kDa polypeptide, PetD), cytochrome f and the Rieske protein, while the 4 small subunits are PetG, PetL, PetM and PetN. The complex functions as a dimer. Heme b serves as cofactor. Heme c is required as a cofactor.

It localises to the plastid. The protein resides in the chloroplast thylakoid membrane. Component of the cytochrome b6-f complex, which mediates electron transfer between photosystem II (PSII) and photosystem I (PSI), cyclic electron flow around PSI, and state transitions. The protein is Cytochrome b6 of Porphyra purpurea (Red seaweed).